Here is a 109-residue protein sequence, read N- to C-terminus: UPF0060 membrane protein PSPA7_1846 (109 aa).

A run of 4 helical transmembrane segments spans residues Leu-5–Leu-25, Leu-27–Leu-47, Ala-59–Glu-79, and Leu-84–Gly-104.

This sequence belongs to the UPF0060 family.

It is found in the cell inner membrane. The sequence is that of UPF0060 membrane protein PSPA7_1846 from Pseudomonas paraeruginosa (strain DSM 24068 / PA7) (Pseudomonas aeruginosa (strain PA7)).